Consider the following 600-residue polypeptide: Pyranose dehydrogenase (600 aa).

The first 25 residues, 1–25, serve as a signal peptide directing secretion; it reads MFPRVVRLNSRLVSFALLGLQIANG. 2 N-linked (GlcNAc...) asparagine glycosylation sites follow: Asn99 and Asn114. His127 carries the tele-8alpha-FAD histidine modification. N-linked (GlcNAc...) asparagine glycosylation is found at Asn199, Asn275, Asn342, Asn399, and Asn507. His535 (proton acceptor) is an active-site residue. Asn546 carries N-linked (GlcNAc...) asparagine glycosylation. His579 is a catalytic residue.

The protein belongs to the GMC oxidoreductase family. In terms of assembly, monomer. The cofactor is FAD. In terms of processing, N-glycosylated.

It is found in the secreted. It catalyses the reaction pyranose + acceptor = pyranos-2-ulose + reduced acceptor.. The enzyme catalyses pyranose + acceptor = pyranos-3-ulose + reduced acceptor.. The catalysed reaction is pyranose + acceptor = pyranos-2,3-diulose + reduced acceptor.. It carries out the reaction a pyranoside + acceptor = a pyranosid-3-ulose + reduced acceptor.. It catalyses the reaction a pyranoside + acceptor = a pyranosid-3,4-diulose + reduced acceptor.. Catalyzes the single-oxidation or sequential double oxidation reaction of carbohydrates primarily at carbon-2 and/or carbon-3 with the concomitant reduction of the flavin. The enzyme exhibits a broad sugar substrate specificity, oxidizing different aldopyranoses to the corresponding C-1, C-2, C-3 or C-1,2, C-2,3 and C-3,4 (di)dehydro sugars with substrate-specific regioselectivity. Accepts only a narrow range of electron acceptors such as substituted benzoquinones and complexed metal ions and reacts extremely slowly with O(2) as acceptor. May play a role in the natural recycling of plant matter by oxidizing all major monosaccharides in lignocellulose and by reducing quinone compounds or reactive radical species generated during lignin depolymerization. This chain is Pyranose dehydrogenase, found in Agaricus xanthodermus (Poison yellow meadow mushroom).